A 107-amino-acid polypeptide reads, in one-letter code: Ig kappa chain V-VI region NQ2-48.2.2 (107 aa).

Residues 1–23 (QILLTQSPAIMSASPGQKVTMTC) are framework-1. C23 and C87 are oxidised to a cystine. The interval 24 to 33 (SASSSVSYMH) is complementarity-determining-1. Residues 34–48 (WYQQKSGTSPKRWIY) are framework-2. The tract at residues 49–55 (DTSKLAS) is complementarity-determining-2. Residues 56-87 (GVPARFSGSGSATSYSLTITSMQAEDAATYYC) form a framework-3 region. A complementarity-determining-3 region spans residues 88–96 (QQWSSNPLT). The tract at residues 97-106 (FGAGTKLXLK) is framework-4.

In terms of biological role, anti-2-phenyl oxazolone (PHOX) Antibody. The protein is Ig kappa chain V-VI region NQ2-48.2.2 of Mus musculus (Mouse).